A 331-amino-acid chain; its full sequence is Coiled-coil domain-containing protein 92 (331 aa).

Coiled coils occupy residues 18–44 (MAATNLENQLHSAQKNLLFLQREHAST) and 76–152 (DGTS…EQRA). The span at 171 to 184 (SSSGTSDASPSGSP) shows a compositional bias: low complexity. Residues 171-212 (SSSGTSDASPSGSPVLASYKPAPPKDKLPETPRRRMKKSLSA) form a disordered region. A compositionally biased stretch (basic and acidic residues) spans 193-203 (PPKDKLPETPR). A Phosphoserine modification is found at serine 209.

As to quaternary structure, interacts with CEP164. In terms of assembly, (Microbial infection) Interacts with ebolavirus protein NP; this interaction sequesters NP in the cytoplasm. Phosphorylated at Ser-209 by TTBK2.

The protein localises to the cytoplasm. The protein resides in the cytoskeleton. Its subcellular location is the microtubule organizing center. It is found in the centrosome. It localises to the centriole. Functionally, interferon-stimulated protein that plays a role in innate immunity. Strongly inhibits ebolavirus transcription and replication. Forms a complex with viral RNA-bound nucleocapsid NP and thereby prevents the transport of NP to the cell surface. This is Coiled-coil domain-containing protein 92 (CCDC92) from Homo sapiens (Human).